Consider the following 194-residue polypeptide: Interleukin-17C (194 aa).

Residues 1–16 (MSLLLLGWLPTGMTHQ) form the signal peptide. 2 cysteine pairs are disulfide-bonded: cysteine 125-cysteine 185 and cysteine 130-cysteine 187.

Belongs to the IL-17 family. Binds to a heterodimer formed by IL17RA and IL17RE. In terms of tissue distribution, expressed by epithelial cells after bacterial challenge. Low expression, if any, in lymphocytes.

The protein resides in the secreted. In terms of biological role, cytokine that plays a crucial role in innate immunity of the epithelium, including to intestinal bacterial pathogens, in an autocrine manner. Stimulates the production of antibacterial peptides and pro-inflammatory molecules for host defense by signaling through the NFKB and MAPK pathways. Acts synergically with IL22, TNF and IL1B in inducing antibacterial peptides. May have protective function by maintaining epithelial homeostasis after an inflammatory challenge, such as that caused in the intestine by dextran sulfate sodium in a colitis model. May also promote an inflammatory phenotype, such as skin in a psoriasis model. Enhanced IL17C/IL17RE signaling may also lead to greater susceptibility to autoimmune diseases, such as autoimmune encephalitis. The sequence is that of Interleukin-17C (Il17c) from Mus musculus (Mouse).